The chain runs to 122 residues: Small ribosomal subunit protein uS13 (122 aa).

The tract at residues 96–122 is disordered; the sequence is LPCRGQRTHTNARTRKGPRKPIAGKKK.

The protein belongs to the universal ribosomal protein uS13 family. As to quaternary structure, part of the 30S ribosomal subunit. Forms a loose heterodimer with protein S19. Forms two bridges to the 50S subunit in the 70S ribosome.

Located at the top of the head of the 30S subunit, it contacts several helices of the 16S rRNA. In the 70S ribosome it contacts the 23S rRNA (bridge B1a) and protein L5 of the 50S subunit (bridge B1b), connecting the 2 subunits; these bridges are implicated in subunit movement. Contacts the tRNAs in the A and P-sites. The protein is Small ribosomal subunit protein uS13 of Magnetococcus marinus (strain ATCC BAA-1437 / JCM 17883 / MC-1).